Reading from the N-terminus, the 392-residue chain is Homeobox protein engrailed-1 (392 aa).

Disordered stretches follow at residues 1-100 (MEEQ…AQLH), 132-164 (ARGG…TRAP), 219-251 (KPSD…PAIL), and 282-306 (SDRP…DKRP). The segment covering 14–36 (SALGAAAAATPGGLSLSLSPGAS) has biased composition (low complexity). Pro residues-rich tracts occupy residues 51–66 (SPQP…PCLP) and 75–84 (PPHPPPPPPQ). Residues 85–100 (HLAAPAHQPQPAAQLH) are compositionally biased toward low complexity. The span at 223 to 236 (TGGGGSGGGAGSPG) shows a compositional bias: gly residues. The segment at residues 303–362 (DKRPRTAFTAEQLQRLKAEFQANRYITEQRRQTLAQELSLNESQIKIWFQNKRAKIKKAT) is a DNA-binding region (homeobox).

Belongs to the engrailed homeobox family.

The protein resides in the nucleus. Required for proper formation of the apical ectodermal ridge and correct dorsal-ventral patterning in the limb. The polypeptide is Homeobox protein engrailed-1 (EN1) (Homo sapiens (Human)).